A 230-amino-acid polypeptide reads, in one-letter code: Thiamine-triphosphatase (230 aa).

Residue alanine 2 is modified to N-acetylalanine. The 197-residue stretch at 5 to 201 (LIEVERKFLP…AKLIVYLQRF (197 aa)) folds into the CYTH domain. The Mg(2+) site is built by glutamate 7 and glutamate 9. Positions 11, 55, 57, 65, and 125 each coordinate substrate. Positions 145, 157, and 159 each coordinate Mg(2+). Glutamate 157 is a binding site for substrate. Lysine 193 provides a ligand contact to substrate.

The protein belongs to the ThTPase family. Monomer. Mg(2+) is required as a cofactor. As to expression, widely expressed but at a low level.

Its subcellular location is the cytoplasm. The catalysed reaction is thiamine triphosphate + H2O = thiamine diphosphate + phosphate + H(+). Hydrolase highly specific for thiamine triphosphate (ThTP). This is Thiamine-triphosphatase (THTPA) from Homo sapiens (Human).